The chain runs to 166 residues: NAD(P)H-quinone oxidoreductase subunit I, chloroplastic (166 aa).

2 consecutive 4Fe-4S ferredoxin-type domains span residues 55-84 (GRIH…VDWK) and 95-124 (LNYS…MTEE). 8 residues coordinate [4Fe-4S] cluster: C64, C67, C70, C74, C104, C107, C110, and C114.

Belongs to the complex I 23 kDa subunit family. NDH is composed of at least 16 different subunits, 5 of which are encoded in the nucleus. [4Fe-4S] cluster is required as a cofactor.

The protein resides in the plastid. It is found in the chloroplast thylakoid membrane. It catalyses the reaction a plastoquinone + NADH + (n+1) H(+)(in) = a plastoquinol + NAD(+) + n H(+)(out). The enzyme catalyses a plastoquinone + NADPH + (n+1) H(+)(in) = a plastoquinol + NADP(+) + n H(+)(out). Its function is as follows. NDH shuttles electrons from NAD(P)H:plastoquinone, via FMN and iron-sulfur (Fe-S) centers, to quinones in the photosynthetic chain and possibly in a chloroplast respiratory chain. The immediate electron acceptor for the enzyme in this species is believed to be plastoquinone. Couples the redox reaction to proton translocation, and thus conserves the redox energy in a proton gradient. This chain is NAD(P)H-quinone oxidoreductase subunit I, chloroplastic, found in Hulsea algida (Pacific hulsea).